The following is a 157-amino-acid chain: Myosin regulatory light chain, striated adductor muscle (157 aa).

2 consecutive EF-hand domains span residues 16 to 51 (KQIQEMKEAFSMIDVDRDGFVSKEDIKAISEQLGRA) and 85 to 120 (DSEETIRNAFAMFDEQETKKLNIEYIKDLLENMGDN). Ca(2+) contacts are provided by Asp-29, Asp-31, Asp-33, and Asp-40.

Functionally, in molluscan muscle, calcium regulation is associated with myosin rather than with actin. Muscle myosin contains two types of light chains: the catalytic light chain, essential for ATPase activity, and the regulatory light chain, a calcium-binding protein responsible for Ca(2+) dependent binding and Ca(2+) dependent Mg-ATPase activity. The chain is Myosin regulatory light chain, striated adductor muscle from Argopecten irradians (Bay scallop).